We begin with the raw amino-acid sequence, 418 residues long: Serine hydroxymethyltransferase (418 aa).

(6S)-5,6,7,8-tetrahydrofolate-binding positions include L121 and 125–127 (GHL). The residue at position 230 (K230) is an N6-(pyridoxal phosphate)lysine. (6S)-5,6,7,8-tetrahydrofolate contacts are provided by residues E246 and 355-357 (SPF).

The protein belongs to the SHMT family. As to quaternary structure, homodimer. It depends on pyridoxal 5'-phosphate as a cofactor.

It is found in the cytoplasm. It catalyses the reaction (6R)-5,10-methylene-5,6,7,8-tetrahydrofolate + glycine + H2O = (6S)-5,6,7,8-tetrahydrofolate + L-serine. The protein operates within one-carbon metabolism; tetrahydrofolate interconversion. It participates in amino-acid biosynthesis; glycine biosynthesis; glycine from L-serine: step 1/1. Catalyzes the reversible interconversion of serine and glycine with tetrahydrofolate (THF) serving as the one-carbon carrier. This reaction serves as the major source of one-carbon groups required for the biosynthesis of purines, thymidylate, methionine, and other important biomolecules. Also exhibits THF-independent aldolase activity toward beta-hydroxyamino acids, producing glycine and aldehydes, via a retro-aldol mechanism. This is Serine hydroxymethyltransferase from Streptococcus pneumoniae serotype 2 (strain D39 / NCTC 7466).